The primary structure comprises 430 residues: APTKAPDVFPIISGCRHPKDNSPVVLACLITGYHPTSVTVTWYMGTQSQPQRTFPEIQRRDSYYMTSSQLSTPLQQWRQGEYKCVVQHTASKSKKEIFRWPESPKAQASSVPTAQPQAEGSLAKATTAPATTRNTGRGGEEKKKEKEKEEQEERETKTPECPSHTQPLGVYLLTPAVQDLWLRDKATFTCFVVGSDLKDAHLTWEVAGKVPTGGVEEGLLERHSNGSQSQHSRLTLPRSLWNAGTSVTCTLNHPSLPPQRLMALREPAAQAPVKLSLNLLASSDPPEAASWLLCEVSGFSPPNILLMWLEDQREVNTSGFAPARPPPQPRSTTFWAWSVLRVPAPPSPQPATYTCVVSHEDSRTLLNASRSLEVSYLAMTPLIPQSKDENSDDYTTFDDVGSLWTTLSTFVALFILTLLYSGIVTFIKVK.

The Extracellular portion of the chain corresponds to 1–406 (APTKAPDVFP…FDDVGSLWTT (406 aa)). Residues 6–98 (PDVFPIISGC…TASKSKKEIF (93 aa)) form the Ig-like 1 domain. An intrachain disulfide couples Cys-28 to Cys-84. The interval 96–167 (EIFRWPESPK…TPECPSHTQP (72 aa)) is disordered. A compositionally biased stretch (polar residues) spans 106–118 (AQASSVPTAQPQA). Residues Ser-109 and Ser-110 are each glycosylated (O-linked (GalNAc...) serine). O-linked (GalNAc...) threonine glycosylation is found at Thr-113, Thr-126, Thr-127, Thr-131, and Thr-132. Positions 138–158 (GGEEKKKEKEKEEQEERETKT) are enriched in basic and acidic residues. 2 Ig-like domains span residues 175–263 (PAVQ…RLMA) and 267–373 (PAAQ…RSLE). 2 disulfide bridges follow: Cys-190–Cys-249 and Cys-294–Cys-355. Residues Asn-225, Asn-316, and Asn-367 are each glycosylated (N-linked (GlcNAc...) asparagine). Residues 407–427 (LSTFVALFILTLLYSGIVTFI) traverse the membrane as a helical segment. Residues 428-430 (KVK) are Cytoplasmic-facing.

Immunoglobulins are composed of two identical heavy chains and two identical light chains; disulfide-linked. An IgD molecule contains thus a delta heavy chain combined with either a kappa or a lambda light chains. Kappa light chains are found predominantly on the membrane IgD (mIgD) form and lambda on the secreted IgD (sIgD) form, this fact is poorly understood. Membrane-bound IgD molecules are non-covalently associated with a heterodimer of CD79A and CD79B.

The protein resides in the secreted. Its subcellular location is the cell membrane. Constant region of immunoglobulin heavy chains. Immunoglobulins, also known as antibodies, are membrane-bound or secreted glycoproteins produced by B lymphocytes. In the recognition phase of humoral immunity, the membrane-bound immunoglobulins serve as receptors which, upon binding of a specific antigen, trigger the clonal expansion and differentiation of B lymphocytes into immunoglobulins-secreting plasma cells. Secreted immunoglobulins mediate the effector phase of humoral immunity, which results in the elimination of bound antigens. The antigen binding site is formed by the variable domain of one heavy chain, together with that of its associated light chain. Thus, each immunoglobulin has two antigen binding sites with remarkable affinity for a particular antigen. The variable domains are assembled by a process called V-(D)-J rearrangement and can then be subjected to somatic hypermutations which, after exposure to antigen and selection, allow affinity maturation for a particular antigen. IgD is the major antigen receptor isotype on the surface of most peripheral B-cells, where it is coexpressed with IgM. The membrane-bound IgD (mIgD) induces the phosphorylation of CD79A and CD79B by the Src family of protein tyrosine kinases. Soluble IgD (sIgD) concentration in serum below those of IgG, IgA, and IgM but much higher than that of IgE. IgM and IgD molecules present on B cells have identical V regions and antigen-binding sites. After the antigen binds to the B-cell receptor, the secreted form sIgD is shut off. IgD is a potent inducer of TNF, IL1B, and IL1RN. IgD also induces release of IL6, IL10, and LIF from peripheral blood mononuclear cells. Monocytes seem to be the main producers of cytokines in vitro in the presence of IgD. The sequence is that of Immunoglobulin heavy constant delta from Homo sapiens (Human).